Consider the following 126-residue polypeptide: Aspartate 1-decarboxylase (126 aa).

The Schiff-base intermediate with substrate; via pyruvic acid role is filled by Ser25. A Pyruvic acid (Ser) modification is found at Ser25. A substrate-binding site is contributed by Thr57. Tyr58 serves as the catalytic Proton donor. Residue 72 to 74 participates in substrate binding; sequence GAT.

Belongs to the PanD family. As to quaternary structure, heterooctamer of four alpha and four beta subunits. It depends on pyruvate as a cofactor. In terms of processing, is synthesized initially as an inactive proenzyme, which is activated by self-cleavage at a specific serine bond to produce a beta-subunit with a hydroxyl group at its C-terminus and an alpha-subunit with a pyruvoyl group at its N-terminus.

It localises to the cytoplasm. The catalysed reaction is L-aspartate + H(+) = beta-alanine + CO2. It functions in the pathway cofactor biosynthesis; (R)-pantothenate biosynthesis; beta-alanine from L-aspartate: step 1/1. In terms of biological role, catalyzes the pyruvoyl-dependent decarboxylation of aspartate to produce beta-alanine. The protein is Aspartate 1-decarboxylase of Campylobacter jejuni subsp. doylei (strain ATCC BAA-1458 / RM4099 / 269.97).